A 96-amino-acid polypeptide reads, in one-letter code: Large ribosomal subunit protein uL23 (96 aa).

Belongs to the universal ribosomal protein uL23 family. In terms of assembly, part of the 50S ribosomal subunit. Contacts protein L29, and trigger factor when it is bound to the ribosome.

Its function is as follows. One of the early assembly proteins it binds 23S rRNA. One of the proteins that surrounds the polypeptide exit tunnel on the outside of the ribosome. Forms the main docking site for trigger factor binding to the ribosome. The chain is Large ribosomal subunit protein uL23 from Onion yellows phytoplasma (strain OY-M).